The chain runs to 107 residues: DNA polymerase delta subunit 4 (107 aa).

The PCNA-interaction protein motif (PIP box) motif lies at 1-16; sequence MGRKRFITDSYPVVKK. The tract at residues 1–40 is disordered; that stretch reads MGRKRFITDSYPVVKKREGPPGHSKGELAPELGEDTQSLS. The segment covering 15 to 28 has biased composition (basic and acidic residues); the sequence is KKREGPPGHSKGEL.

Belongs to the DNA polymerase delta subunit 4 family. As to quaternary structure, component of the tetrameric DNA polymerase delta complex (Pol-delta4), which consists of POLD1/p125, POLD2/p50, POLD3/p66/p68 and POLD4/p12, with POLD1 bearing DNA polymerase and 3' to 5' proofreading exonuclease activities. Within this complex, directly interacts with POLD1 and POLD2. Directly interacts with PCNA, as do POLD1 and POLD3; this interaction stimulates Pol-delta4 polymerase activity. As POLD1 and POLD2, directly interacts with WRNIP1; this interaction stimulates DNA polymerase delta-mediated DNA synthesis, independently of the presence of PCNA, possibly by increasing initiation frequency. Upon genotoxic stress induced by DNA damaging agents or by replication stress, POLD4 is proteolytically degraded and Pol-delta4 is converted into a trimeric form of the complex (Pol-delta3) that has an increased proofreading activity. The DNA polymerase delta complex interacts with POLDIP2; this interaction is probably mediated through direct binding to POLD2. Ubiquitinated; undergoes 'Lys-48'-linked polyubiquitination in response to UV irradiation or treatment with an alkylating agent, leading to proteasomal degradation. This modification is mediated, at least in part, by RNF8. In terms of processing, ubiquitinated; undergoes 'Lys-48'-linked ubiquitination in response to UV irradiation, leading to proteasomal degradation. This modification is partly mediated by RNF8 and by the DCX(DTL) E3 ubiquitin ligase complex (also called CRL4(CDT2)). Efficient degradation requires the presence of PCNA and is required for the inhibition of fork progression after DNA damage.

The protein resides in the nucleus. As a component of the tetrameric DNA polymerase delta complex (Pol-delta4), plays a role in high fidelity genome replication and repair. Within this complex, increases the rate of DNA synthesis and decreases fidelity by regulating POLD1 polymerase and proofreading 3' to 5' exonuclease activity. Pol-delta4 participates in Okazaki fragment processing, through both the short flap pathway, as well as a nick translation system. Under conditions of DNA replication stress, required for the repair of broken replication forks through break-induced replication (BIR), a mechanism that may induce segmental genomic duplications of up to 200 kb. Involved in Pol-delta4 translesion synthesis (TLS) of templates carrying O6-methylguanine or abasic sites. Its degradation in response to DNA damage is required for the inhibition of fork progression and cell survival. The polypeptide is DNA polymerase delta subunit 4 (Pold4) (Mus musculus (Mouse)).